A 196-amino-acid chain; its full sequence is Large ribosomal subunit protein uL11m (196 aa).

It belongs to the universal ribosomal protein uL11 family. In terms of assembly, component of the mitochondrial ribosome large subunit (39S) which comprises a 16S rRNA and about 50 distinct proteins.

It localises to the mitochondrion. This chain is Large ribosomal subunit protein uL11m (mRpL11), found in Drosophila melanogaster (Fruit fly).